Consider the following 1140-residue polypeptide: Calcium-activated potassium channel slo-1 (1140 aa).

Topologically, residues 1-44 (MGEIYSPSQSKGFNQPYGYPMNCNLSRVFMEMTEEDRKCLEERK) are extracellular. A helical transmembrane segment spans residues 45–65 (YWCFLLSSITTFCASMILVVI). Over 66-139 (WRVVTHLCCQ…LISGQSLTGR (74 aa)) the chain is Cytoplasmic. A helical transmembrane segment spans residues 140 to 161 (FLVLLVFILSIGSLIIYFYDAS). Topologically, residues 162–178 (FQNFQVETCIPWQDSPS) are extracellular. The chain crosses the membrane as a helical span at residues 179–199 (QQIDLGFNIFFLVYFFIRFIA). Residues 200 to 203 (ASDK) are Cytoplasmic-facing. The helical transmembrane segment at 204 to 224 (VWFLLEMYSWIDFFTIPPSFV) threads the bilayer. Residues 225-228 (AIYL) are Extracellular-facing. Residues 229–249 (QRNWLGFRFLRALRLMTVPDI) form a helical; Voltage-sensor membrane-spanning segment. Residues 250–264 (LQYLNILKTSSSIRL) lie on the Cytoplasmic side of the membrane. The chain crosses the membrane as a helical span at residues 265–285 (TQLVTIFVAVCLTGAGLVHLL). Over 286–299 (ENSGDFFKGFINPH) the chain is Extracellular. The segment at residues 300–322 (RITYADSVYFVLVTMSTVGYGDI) is an intramembrane region (pore-forming). A Selectivity for potassium motif is present at residues 316-319 (TVGY). At 323 to 331 (YCTTLCGRL) the chain is on the extracellular side. Residues 332 to 352 (FMIFFILFGLAMFASYVPEIA) traverse the membrane as a helical segment. Residues 353–1140 (DLIGNRQKYG…LEYEPGKRHF (788 aa)) lie on the Cytoplasmic side of the membrane. The RCK N-terminal 1 domain occupies 371-514 (KKHIVVCGHI…DWKRGDDVIC (144 aa)). The segment at 520–540 (LGFIAQSCLAPGFSTMMANLF) is segment S7. A segment S8 region spans residues 578 to 598 (MTFPEAVDLLFNRLGLLLLAI). Residues 797-817 (VLNGHVVVCLFADQDSPLIGL) form a segment S9 region. One can recognise an RCK N-terminal 2 domain in the interval 799–953 (NGHVVVCLFA…GAKFGTNVPM (155 aa)). The Calcium bowl signature appears at 955–977 (TELVNDSNVQFLDQDDDDDPDTE). Ca(2+)-binding residues include Gln-964, Asp-967, Asp-970, and Asp-972. The interval 984–1004 (FACGTAFAISVLDSLMSTTYF) is segment S10.

This sequence belongs to the potassium channel family. Calcium-activated (TC 1.A.1.3) subfamily. Slo sub-subfamily. As to quaternary structure, homotetramer; which constitutes the calcium-activated potassium channel. Phosphorylated. Expressed in synaptic regions of the nervous system including in both the nerve ring and nerve cords, as well as in the body-wall and vulval muscle. Expressed broadly in motor neurons. Forms puncta at presynaptic terminals of neurons, muscle excitation sites, and in the dorsal nerve cord.

It localises to the cell membrane. The protein localises to the synapse. Potassium channel activated by both membrane depolarization or increase in cytosolic Ca(2+) that mediates export of K(+). Its activation dampens the excitatory events that elevate the cytosolic Ca(2+) concentration and/or depolarize the cell membrane. It therefore contributes to repolarization of the membrane potential. Essential for the regulation of neurotransmitter release at synapses. Regulates longevity and age-associated decline in motor activity in mid-late life, by acting in motor neurons and through daf-16 in the intestine. When clustered in neurons, mediates ethanol-induced suppression of locomotory and egg-laying behaviors. In Caenorhabditis elegans, this protein is Calcium-activated potassium channel slo-1.